Consider the following 321-residue polypeptide: NADH-ubiquinone oxidoreductase chain 1 (321 aa).

Helical transmembrane passes span 2 to 22, 71 to 91, 104 to 124, 148 to 168, 173 to 193, 224 to 244, 255 to 275, and 295 to 315; these read LVMLTSTLILVLMVLLAVAFL, ALFIAAPIMALTLALSLWMFI, LLVILAISSLSVYASLGSGWA, LGLILLCLIILTGGFSLQAFI, HTWFLLSSWPLAAMWFVSTLA, LFFLAEYSNILFMNTLTAIMF, ILPIINVMMKATPLIILFLWI, and FLPLNLALFTLQLSLAVSLGG.

It belongs to the complex I subunit 1 family.

The protein resides in the mitochondrion inner membrane. The enzyme catalyses a ubiquinone + NADH + 5 H(+)(in) = a ubiquinol + NAD(+) + 4 H(+)(out). In terms of biological role, core subunit of the mitochondrial membrane respiratory chain NADH dehydrogenase (Complex I) that is believed to belong to the minimal assembly required for catalysis. Complex I functions in the transfer of electrons from NADH to the respiratory chain. The immediate electron acceptor for the enzyme is believed to be ubiquinone. The sequence is that of NADH-ubiquinone oxidoreductase chain 1 (MT-ND1) from Lampetra fluviatilis (European river lamprey).